The chain runs to 288 residues: Pyridoxal kinase PdxY (288 aa).

Residues Ser12 and 47 to 48 contribute to the substrate site; that span reads TQ. Residues Asp114, Glu151, Lys184, and 211–214 contribute to the ATP site; that span reads RPLL. Asp225 is a binding site for substrate.

The protein belongs to the pyridoxine kinase family. PdxY subfamily. In terms of assembly, homodimer. The cofactor is Mg(2+).

It carries out the reaction pyridoxal + ATP = pyridoxal 5'-phosphate + ADP + H(+). Its pathway is cofactor metabolism; pyridoxal 5'-phosphate salvage; pyridoxal 5'-phosphate from pyridoxal: step 1/1. Its function is as follows. Pyridoxal kinase involved in the salvage pathway of pyridoxal 5'-phosphate (PLP). Catalyzes the phosphorylation of pyridoxal to PLP. This chain is Pyridoxal kinase PdxY, found in Pseudomonas aeruginosa (strain UCBPP-PA14).